A 172-amino-acid polypeptide reads, in one-letter code: Adenine phosphoribosyltransferase (172 aa).

This sequence belongs to the purine/pyrimidine phosphoribosyltransferase family. Homodimer.

The protein resides in the cytoplasm. The catalysed reaction is AMP + diphosphate = 5-phospho-alpha-D-ribose 1-diphosphate + adenine. It participates in purine metabolism; AMP biosynthesis via salvage pathway; AMP from adenine: step 1/1. Its function is as follows. Catalyzes a salvage reaction resulting in the formation of AMP, that is energically less costly than de novo synthesis. The chain is Adenine phosphoribosyltransferase from Streptococcus thermophilus (strain ATCC BAA-250 / LMG 18311).